The following is a 493-amino-acid chain: Endothelial lipase (493 aa).

The N-terminal stretch at 1–23 is a signal peptide; that stretch reads MRDPVFLLGFWSLYCCFPAGSLT. A disulfide bond links C66 and C79. N-linked (GlcNAc...) asparagine glycans are attached at residues N67 and N82. The Nucleophile role is filled by S171. The active-site Charge relay system is D195. C254 and C274 are oxidised to a cystine. H276 acts as the Charge relay system in catalysis. 2 disulfide bridges follow: C299–C318 and C310–C313. Residue 327 to 339 participates in heparin binding; it reads KMRKKRNSKMYLK. Residues 349–484 form the PLAT domain; sequence YHYQLKVHMF…SPGQELWFYK (136 aa). An N-linked (GlcNAc...) asparagine glycan is attached at N395. A disulfide bond links C465 and C485.

Belongs to the AB hydrolase superfamily. Lipase family. As to quaternary structure, head to tail Homodimer. Interacts with apolipoprotein C-2.

Its subcellular location is the secreted. It carries out the reaction a triacylglycerol + H2O = a diacylglycerol + a fatty acid + H(+). The enzyme catalyses a 1,2-diacyl-sn-glycero-3-phosphocholine + H2O = a 2-acyl-sn-glycero-3-phosphocholine + a fatty acid + H(+). The catalysed reaction is 1,2,3-tri-(9Z-octadecenoyl)-glycerol + H2O = di-(9Z)-octadecenoylglycerol + (9Z)-octadecenoate + H(+). It catalyses the reaction 1,2,3-tributanoylglycerol + H2O = dibutanoylglycerol + butanoate + H(+). It carries out the reaction 1,2-dihexadecanoyl-sn-glycero-3-phosphocholine + H2O = hexadecanoyl-sn-glycero-3-phosphocholine + hexadecanoate + H(+). Functionally, exerts both phospholipase and triglyceride lipase activities. More active as a phospholipase than a triglyceride lipase. Hydrolyzes triglycerides, both with short-chain fatty acyl groups (tributyrin) and long-chain fatty acyl groups (triolein) with similar levels of activity toward both types of substrates. Hydrolyzes high density lipoproteins (HDL) more efficiently than other lipoproteins. The sequence is that of Endothelial lipase (Lipg) from Rattus norvegicus (Rat).